The primary structure comprises 450 residues: UDP-N-acetylmuramoylalanine--D-glutamate ligase (450 aa).

115–121 is an ATP binding site; that stretch reads GTNGKST.

It belongs to the MurCDEF family.

It is found in the cytoplasm. It carries out the reaction UDP-N-acetyl-alpha-D-muramoyl-L-alanine + D-glutamate + ATP = UDP-N-acetyl-alpha-D-muramoyl-L-alanyl-D-glutamate + ADP + phosphate + H(+). It participates in cell wall biogenesis; peptidoglycan biosynthesis. In terms of biological role, cell wall formation. Catalyzes the addition of glutamate to the nucleotide precursor UDP-N-acetylmuramoyl-L-alanine (UMA). The chain is UDP-N-acetylmuramoylalanine--D-glutamate ligase from Syntrophotalea carbinolica (strain DSM 2380 / NBRC 103641 / GraBd1) (Pelobacter carbinolicus).